Here is a 259-residue protein sequence, read N- to C-terminus: GTP-binding protein RHO4 (259 aa).

G59 to T66 contributes to the GTP binding site. The Effector region motif lies at Y81 to Y89. Residues D107 to Q111 and L165 to D168 each bind GTP. C256 bears the Cysteine methyl ester mark. C256 is lipidated: S-geranylgeranyl cysteine. A propeptide spans V257–L259 (removed in mature form).

It belongs to the small GTPase superfamily. Rho family.

It localises to the cell membrane. The protein is GTP-binding protein RHO4 (RHO4) of Eremothecium gossypii (strain ATCC 10895 / CBS 109.51 / FGSC 9923 / NRRL Y-1056) (Yeast).